We begin with the raw amino-acid sequence, 661 residues long: CD180 antigen (661 aa).

The first 20 residues, 1-20 (MAPDISCFFLVALFLASCRA), serve as a signal peptide directing secretion. Residues 21-626 (TTSSDQKCIE…RLSDVTLSCS (606 aa)) lie on the Extracellular side of the membrane. Residues 33 to 53 (VNKTYNCENLGLNEIPGTLPN) form the LRRNT domain. N-linked (GlcNAc...) asparagine glycosylation is found at Asn-34, Asn-53, Asn-70, and Asn-78. LRR repeat units follow at residues 54–75 (STEC…TFSR), 78–99 (NLTF…TFQS), 102–123 (RLDT…ALSG), 126–147 (ALKH…PLHN), 150–171 (TLES…KGFP), 174–195 (KLKV…DMSS), and 201–221 (NLSL…AFDS). Residues Asn-201, Asn-244, and Asn-288 are each glycosylated (N-linked (GlcNAc...) asparagine). 5 LRR repeats span residues 275–296 (SVES…TFHC), 299–321 (GLQE…VGLS), 322–343 (TLKK…SASN), 346–366 (SLTH…TGCL), and 371–391 (NLRE…CNLQ). N-linked (GlcNAc...) asparagine glycans are attached at residues Asn-394 and Asn-402. 7 LRR repeats span residues 397–418 (HLQS…AFKE), 421–442 (QLEL…SPFQ), 446–466 (LLKV…QLFD), 470–493 (ALQH…NSLQ), 497–518 (RLEI…AFTS), 521–544 (MMNH…SHLK), and 546–566 (IYLN…LPIL). N-linked (GlcNAc...) asparagine glycosylation is present at Asn-451. One can recognise an LRRCT domain in the interval 577 to 627 (NPLDCTCSNIYFLEWYKENMQKLEDTEDTLCENPPLLRGVRLSDVTLSCSM). Residues 627–650 (MAAVGIFFLIVFLLVFAILLIFAV) traverse the membrane as a helical segment. The Cytoplasmic portion of the chain corresponds to 651-661 (KYFLRWKYQHI).

The protein belongs to the Toll-like receptor family. M-shaped tetramer of two CD180-LY86 heterodimers. B-lymphocytes and spleen. Not detected in thymus, kidney, muscle, heart, brain or liver.

Its subcellular location is the cell membrane. In terms of biological role, may cooperate with MD-1 and TLR4 to mediate the innate immune response to bacterial lipopolysaccharide (LPS) in B-cells. Leads to NF-kappa-B activation. Also involved in the life/death decision of B-cells. This chain is CD180 antigen (Cd180), found in Mus musculus (Mouse).